Consider the following 114-residue polypeptide: Beta-microseminoprotein (114 aa).

Positions 1-20 (MNVLLGGFVIFATFVTLCNA) are cleaved as a signal peptide. Cystine bridges form between C22-C70, C38-C62, C57-C93, C60-C69, and C84-C107.

Belongs to the beta-microseminoprotein family. Homodimer; Interacts with PI16.

The protein resides in the secreted. The sequence is that of Beta-microseminoprotein (MSMB) from Papio anubis (Olive baboon).